Consider the following 268-residue polypeptide: Trans-aconitate 2-methyltransferase (268 aa).

The protein belongs to the methyltransferase superfamily. Tam family.

It localises to the cytoplasm. It carries out the reaction trans-aconitate + S-adenosyl-L-methionine = (E)-3-(methoxycarbonyl)pent-2-enedioate + S-adenosyl-L-homocysteine. Its function is as follows. Catalyzes the S-adenosylmethionine monomethyl esterification of trans-aconitate. The polypeptide is Trans-aconitate 2-methyltransferase (Delftia acidovorans (strain DSM 14801 / SPH-1)).